The following is a 351-amino-acid chain: Inner kinetochore subunit fta2 (351 aa).

A disordered region spans residues 1–71 (MSGRRYSQIS…SSNGRVDTDR (71 aa)). Over residues 7–18 (SQISQQEGSSSS) the composition is skewed to low complexity. Residues 54-66 (NENSGQSKSSNGR) are compositionally biased toward polar residues.

It belongs to the CENP-P/CTF19 family. In terms of assembly, component of the heterotetrameric kinetochore subcomplex COMA, which consists of fta2, fta7, mal2 and mis17. The COMA subcomplex is part of a larger constitutive centromere-associated network (CCAN) (also known as central kinetochore Sim4 complex in fission yeast), which is composed of at least cnl2, cnp3, cnp20, fta1, fta2, fta3, fta4, fta6, fta7, mal2, mhf1, mhf2, mis6, mis15, mis17, sim4 and wip1.

The protein resides in the nucleus. It is found in the chromosome. It localises to the centromere. The protein localises to the kinetochore. In terms of biological role, component of the kinetochore, a multiprotein complex that assembles on centromeric DNA and attaches chromosomes to spindle microtubules, mediating chromosome segregation and sister chromatid segregation during meiosis and mitosis. Component of the inner kinetochore COMA complex, which connects centromere-associated proteins and the outer kinetochore. COMA interacts with other inner kinetochore proteins to form the inner kinetochore constitutive centromere-associated network (CCAN), which serves as a structural platform for outer kinetochore assembly. Fta2, fta3 and fta4 associate with the central core (cnt) and inner repeat (inr) region of the centromere. This Schizosaccharomyces pombe (strain 972 / ATCC 24843) (Fission yeast) protein is Inner kinetochore subunit fta2 (fta2).